The chain runs to 403 residues: 4-hydroxy-3-methylbut-2-enyl diphosphate reductase (403 aa).

Position 66 (C66) interacts with [4Fe-4S] cluster. A (2E)-4-hydroxy-3-methylbut-2-enyl diphosphate-binding site is contributed by H96. H96 contributes to the dimethylallyl diphosphate binding site. H96 serves as a coordination point for isopentenyl diphosphate. C157 contributes to the [4Fe-4S] cluster binding site. Residue H185 coordinates (2E)-4-hydroxy-3-methylbut-2-enyl diphosphate. H185 provides a ligand contact to dimethylallyl diphosphate. Residue H185 participates in isopentenyl diphosphate binding. E187 serves as the catalytic Proton donor. T250 contributes to the (2E)-4-hydroxy-3-methylbut-2-enyl diphosphate binding site. C288 serves as a coordination point for [4Fe-4S] cluster. 4 residues coordinate (2E)-4-hydroxy-3-methylbut-2-enyl diphosphate: S317, S318, N319, and S379. The dimethylallyl diphosphate site is built by S317, S318, N319, and S379. Residues S317, S318, N319, and S379 each coordinate isopentenyl diphosphate.

The protein belongs to the IspH family. [4Fe-4S] cluster is required as a cofactor.

It catalyses the reaction isopentenyl diphosphate + 2 oxidized [2Fe-2S]-[ferredoxin] + H2O = (2E)-4-hydroxy-3-methylbut-2-enyl diphosphate + 2 reduced [2Fe-2S]-[ferredoxin] + 2 H(+). It carries out the reaction dimethylallyl diphosphate + 2 oxidized [2Fe-2S]-[ferredoxin] + H2O = (2E)-4-hydroxy-3-methylbut-2-enyl diphosphate + 2 reduced [2Fe-2S]-[ferredoxin] + 2 H(+). It participates in isoprenoid biosynthesis; dimethylallyl diphosphate biosynthesis; dimethylallyl diphosphate from (2E)-4-hydroxy-3-methylbutenyl diphosphate: step 1/1. Its pathway is isoprenoid biosynthesis; isopentenyl diphosphate biosynthesis via DXP pathway; isopentenyl diphosphate from 1-deoxy-D-xylulose 5-phosphate: step 6/6. Functionally, catalyzes the conversion of 1-hydroxy-2-methyl-2-(E)-butenyl 4-diphosphate (HMBPP) into a mixture of isopentenyl diphosphate (IPP) and dimethylallyl diphosphate (DMAPP). Acts in the terminal step of the DOXP/MEP pathway for isoprenoid precursor biosynthesis. This is 4-hydroxy-3-methylbut-2-enyl diphosphate reductase from Picosynechococcus sp. (strain ATCC 27264 / PCC 7002 / PR-6) (Agmenellum quadruplicatum).